The primary structure comprises 83 residues: Large ribosomal subunit protein uL23 (83 aa).

The protein belongs to the universal ribosomal protein uL23 family. Part of the 50S ribosomal subunit. Contacts protein L29.

In terms of biological role, binds to 23S rRNA. One of the proteins that surrounds the polypeptide exit tunnel on the outside of the ribosome. This chain is Large ribosomal subunit protein uL23, found in Thermoplasma volcanium (strain ATCC 51530 / DSM 4299 / JCM 9571 / NBRC 15438 / GSS1).